The primary structure comprises 271 residues: Oxamate carbamoyltransferase subunit AllH (271 aa).

Belongs to the AllH family. As to quaternary structure, the OXTCase is composed of 3 subunits, AllF, AllG and AllH. It depends on Mg(2+) as a cofactor.

It catalyses the reaction oxamate + carbamoyl phosphate = N-carbamoyl-2-oxoglycine + phosphate. It functions in the pathway nitrogen metabolism; (S)-allantoin degradation. Its function is as follows. Component of a carbamoyltransferase involved in the anaerobic nitrogen utilization via the assimilation of allantoin. Catalyzes the conversion of oxalurate (N-carbamoyl-2-oxoglycine) to oxamate and carbamoyl phosphate. This is Oxamate carbamoyltransferase subunit AllH from Escherichia coli O157:H7.